The chain runs to 725 residues: NAD(+) hydrolase SARM1 (725 aa).

The N-terminal 27 residues, 1 to 27, are a transit peptide targeting the mitochondrion; the sequence is MVLTILFSAYKLCRFFAMSSPRPGAER. The ARM 1 repeat unit spans residues 60–100; the sequence is EVQGALERALPELQQALSALKQAGGGRAVGAGLAEVFQLVE. Residues W103, R110, 149–158, and 191–194 each bind NAD(+); these read EQILVAENRR and HMFK. 7 ARM repeats span residues 114 to 153, 155 to 194, 197 to 236, 238 to 281, 282 to 315, 316 to 355, and 360 to 403; these read QGLC…QILV, ENRR…HMFK, EETC…NCAM, GGQA…LATN, KEVE…CLVD, ASDT…AEAV, and KNRN…EEVP. 2 SAM domains span residues 413-477 and 483-549; these read WKEA…LKTF and CDRS…MLHS. 2 positions are modified to phosphoserine: S549 and S559. In terms of domain architecture, TIR spans 561–704; sequence DVPDVFISYR…KIIRFLQGRS (144 aa). NAD(+)-binding positions include 570–571 and E600; that span reads RR. Residue E643 is part of the active site. The disordered stretch occupies residues 705–725; the sequence is SRDSSAGSDTSLEGAAPMGPT.

It belongs to the SARM1 family. Homooctamer; forms an octameric ring via SAM domains. Interacts with TICAM1/TRIF and thereby interferes with TICAM1/TRIF function. Interacts with MAPK10/JNK3 and SDC2 (via cytoplasmic domain). Phosphorylation at Ser-549 by JNK kinases (MAPK8, MAPK9 and /or MAPK10) enhance the NAD(+) hydrolase (NADase) activity. Phosphorylation at Ser-549 and subsequent activation takes place in response to oxidative stress conditions and inhibits mitochondrial respiration. In terms of tissue distribution, highest expression seen in the spleen and the brain, followed by lung, kidney, liver and other tissues.

It localises to the cytoplasm. It is found in the cell projection. The protein localises to the axon. Its subcellular location is the dendrite. The protein resides in the synapse. It localises to the mitochondrion. The enzyme catalyses NAD(+) + H2O = ADP-D-ribose + nicotinamide + H(+). It carries out the reaction NAD(+) = cyclic ADP-beta-D-ribose + nicotinamide + H(+). The catalysed reaction is NADP(+) + H2O = ADP-D-ribose 2'-phosphate + nicotinamide + H(+). Its activity is regulated as follows. Autoinhibited: in the inactive state, the enzymatic TIR domain is held apart by the autoinhibiting ARM repeats. NAD(+)-binding to ARM repeats maintains an inactive state by promoting interaction between ARM repeats and the TIR domain, thereby facilitating inhibition of the enzymatic TIR domain. Following activation, possibly by nicotinamide mononucleotide (NMN), auto-inhibitory interactions are released, allowing self-association of the TIR domains and subsequent activation of the NAD(+) hydrolase (NADase) activity. Self-association of TIR domains is facilitated by the octamer of SAM domains. Functionally, NAD(+) hydrolase, which plays a key role in axonal degeneration following injury by regulating NAD(+) metabolism. Acts as a negative regulator of MYD88- and TRIF-dependent toll-like receptor signaling pathway by promoting Wallerian degeneration, an injury-induced form of programmed subcellular death which involves degeneration of an axon distal to the injury site. Wallerian degeneration is triggered by NAD(+) depletion: in response to injury, SARM1 is activated and catalyzes cleavage of NAD(+) into ADP-D-ribose (ADPR), cyclic ADPR (cADPR) and nicotinamide; NAD(+) cleavage promoting cytoskeletal degradation and axon destruction. Also able to hydrolyze NADP(+), but not other NAD(+)-related molecules. Can activate neuronal cell death in response to stress. Regulates dendritic arborization through the MAPK4-JNK pathway. Involved in innate immune response: inhibits both TICAM1/TRIF- and MYD88-dependent activation of JUN/AP-1, TRIF-dependent activation of NF-kappa-B and IRF3, and the phosphorylation of MAPK14/p38. The chain is NAD(+) hydrolase SARM1 from Sus scrofa (Pig).